The sequence spans 620 residues: Chaperone protein HscA homolog (620 aa).

The protein belongs to the heat shock protein 70 family.

Its function is as follows. Chaperone involved in the maturation of iron-sulfur cluster-containing proteins. Has a low intrinsic ATPase activity which is markedly stimulated by HscB. The polypeptide is Chaperone protein HscA homolog (Pseudomonas fluorescens (strain ATCC BAA-477 / NRRL B-23932 / Pf-5)).